We begin with the raw amino-acid sequence, 313 residues long: Cadmium, cobalt and zinc/H(+)-K(+) antiporter (313 aa).

At 1–14 (MGHNHNHAGGSNKK) the chain is on the extracellular side. A helical membrane pass occupies residues 15–35 (VLLISFIMITGYMIIEAIGGF). Residues 36-45 (LTNSLALLSD) lie on the Cytoplasmic side of the membrane. A helical transmembrane segment spans residues 46–66 (AGHMLSDSISLMVALIAFKLA). Residues 67–80 (EKKASHHKTFGYKR) are Extracellular-facing. Residues 81 to 101 (FEILAAVINGVALILISLYII) traverse the membrane as a helical segment. Residues 102 to 117 (YEAIKRFSHPPEVATT) are Cytoplasmic-facing. The helical transmembrane segment at 118–138 (GMLTISIIGLAVNILVAWIML) threads the bilayer. At 139–159 (NGGDTKNNLNIRGAYLHVISD) the chain is on the extracellular side. A helical membrane pass occupies residues 160–180 (MLGSIGAILAAILIIFFGWSW). At 181–313 (ADPAASVIVA…TENPRDHHHH (133 aa)) the chain is on the cytoplasmic side.

It belongs to the cation diffusion facilitator (CDF) transporter (TC 2.A.4) family. SLC30A subfamily.

Its subcellular location is the cell membrane. In terms of biological role, involved in divalent cation and potassium homeostasis in the cell. Catalyzes the active efflux of zinc, cadmium and cobalt, in exchange for potassium and H(+) ions. This chain is Cadmium, cobalt and zinc/H(+)-K(+) antiporter (czcD), found in Bacillus velezensis (strain DSM 23117 / BGSC 10A6 / LMG 26770 / FZB42) (Bacillus amyloliquefaciens subsp. plantarum).